We begin with the raw amino-acid sequence, 190 residues long: Cytoglobin (190 aa).

Residues 18–167 (ELSEAERKAV…IYSHVTAAYK (150 aa)) form the Globin domain. The cysteines at positions 38 and 83 are disulfide-linked. Positions 81 and 113 each coordinate heme b.

This sequence belongs to the globin family. In terms of assembly, monomeric. Homodimer; disulfide-linked in vitro. Also homooligomeric in vitro. In terms of processing, the formation of an intramolecular disulfide bond between cysteines Cys-38 and Cys-83 specifically enhances the nitrite reductase activity. Widely expressed. Highest expression in heart, stomach, bladder and small intestine.

Its subcellular location is the cytoplasm. It is found in the nucleus. The enzyme catalyses Fe(II)-heme b-[protein] + nitric oxide + O2 = Fe(III)-heme b-[protein] + nitrate. The catalysed reaction is Fe(III)-heme b-[protein] + nitric oxide + H2O = Fe(II)-heme b-[protein] + nitrite + 2 H(+). It carries out the reaction 2 superoxide + 2 H(+) = H2O2 + O2. It catalyses the reaction H2O2 + AH2 = A + 2 H2O. With respect to regulation, the nitric oxide dioxygenase activity is activated by a reducing system composed of cytochrome b5, its upstream reductase CYB5R3 and NADH. Probable multifunctional globin with a hexacoordinated heme iron required for the catalysis of various reactions depending on redox condition of the cell as well as oxygen availability. Has a nitric oxide dioxygenase (NOD) activity and is most probably involved in cell-mediated and oxygen-dependent nitric oxide consumption. By scavenging this second messenger may regulate several biological processes including endothelium-mediated vasodilation and vascular tone. Under normoxic conditions functions as a nitric oxide dioxygenase (NOD) but under hypoxic conditions the globin may switch its function to that of a nitrite (NO2) reductase (NiR), generating nitric oxide. Could also have peroxidase and superoxide dismutase activities, detoxifying reactive oxygen species and protecting cells against oxidative stress. Also binds dioxygen with low affinity and could function as an oxygen sensor but has probably no function as a respiratory oxygen carrier. The protein is Cytoglobin of Homo sapiens (Human).